The primary structure comprises 296 residues: Light-independent protochlorophyllide reductase iron-sulfur ATP-binding protein (296 aa).

Residues 39–44 (GIGKST) and Lys-68 contribute to the ATP site. Residue Ser-43 coordinates Mg(2+). The [4Fe-4S] cluster site is built by Cys-124 and Cys-158. Position 209–210 (209–210 (NR)) interacts with ATP.

It belongs to the NifH/BchL/ChlL family. In terms of assembly, homodimer. Protochlorophyllide reductase is composed of three subunits; ChlL, ChlN and ChlB. Requires [4Fe-4S] cluster as cofactor.

It catalyses the reaction chlorophyllide a + oxidized 2[4Fe-4S]-[ferredoxin] + 2 ADP + 2 phosphate = protochlorophyllide a + reduced 2[4Fe-4S]-[ferredoxin] + 2 ATP + 2 H2O. It functions in the pathway porphyrin-containing compound metabolism; chlorophyll biosynthesis (light-independent). Its function is as follows. Component of the dark-operative protochlorophyllide reductase (DPOR) that uses Mg-ATP and reduced ferredoxin to reduce ring D of protochlorophyllide (Pchlide) to form chlorophyllide a (Chlide). This reaction is light-independent. The L component serves as a unique electron donor to the NB-component of the complex, and binds Mg-ATP. The sequence is that of Light-independent protochlorophyllide reductase iron-sulfur ATP-binding protein from Prochlorococcus marinus (strain MIT 9211).